We begin with the raw amino-acid sequence, 73 residues long: U3-agatoxin-Ao1i (73 aa).

A signal peptide spans 1-20; sequence MRTIISLLLLSAMVFAEIEA. Residues 21–34 constitute a propeptide that is removed on maturation; that stretch reads ISLEEGLQLFEGER. Intrachain disulfides connect Cys36/Cys52, Cys43/Cys57, Cys51/Cys67, and Cys59/Cys65. Ser71 is modified (serine amide).

The protein belongs to the neurotoxin 07 (Beta/delta-agtx) family. 03 (aga-4) subfamily. Aga sub-subfamily. As to expression, expressed by the venom gland.

The protein resides in the secreted. Functionally, insecticidal neurotoxin that induces an irreversible spastic paralysis when injected into insects. Modifies presynaptic voltage-gated sodium channels (Nav), causing them to open at the normal resting potential of the nerve. This leads to spontaneous release of neurotransmitter and repetitive action potentials in motor neurons. This is U3-agatoxin-Ao1i from Agelena orientalis (Funnel-web spider).